The following is a 626-amino-acid chain: Methanol dehydrogenase [cytochrome c] subunit 1 (626 aa).

Positions 1 to 27 are cleaved as a signal peptide; that stretch reads MSRFVTSVSALAMLALAPAALSSGAYA. A disulfide bridge connects residues Cys130 and Cys131. The Ca(2+) site is built by Glu204 and Asn288. Catalysis depends on Asp330, which acts as the Proton acceptor. A disulfide bridge connects residues Cys413 and Cys442.

Belongs to the bacterial PQQ dehydrogenase family. In terms of assembly, heterotetramer composed of 2 alpha and 2 beta subunits. It depends on pyrroloquinoline quinone as a cofactor. Ca(2+) serves as cofactor.

The protein resides in the cell inner membrane. It catalyses the reaction 2 Fe(III)-[cytochrome cL] + a primary alcohol = 2 Fe(II)-[cytochrome cL] + an aldehyde + 2 H(+). Functionally, catalyzes the oxidation of primary alcohols including methanol. In Methylorubrum extorquens (strain ATCC 14718 / DSM 1338 / JCM 2805 / NCIMB 9133 / AM1) (Methylobacterium extorquens), this protein is Methanol dehydrogenase [cytochrome c] subunit 1 (moxF).